Here is a 581-residue protein sequence, read N- to C-terminus: Frizzled-8 (581 aa).

The N-terminal stretch at 1-23 (MESLSLSLLLLVSWLQGSQCAAA) is a signal peptide. The FZ domain maps to 24–144 (KELSCQEITV…GNPDTLCMDY (121 aa)). At 24 to 239 (KELSCQEITV…PEERTFTEFW (216 aa)) the chain is on the extracellular side. 5 disulfide bridges follow: Cys-28–Cys-89, Cys-36–Cys-82, Cys-73–Cys-111, Cys-100–Cys-141, and Cys-104–Cys-128. N-linked (GlcNAc...) asparagine glycosylation is present at Asn-42. Residue 64 to 71 (QFWPLVVI) coordinates hexadecanoate. The segment at 88-93 (ICLEDY) is wnt-binding. The wnt-binding stretch occupies residues 140 to 146 (LCMDYYN). An N-linked (GlcNAc...) asparagine glycan is attached at Asn-146. The tract at residues 151–189 (TTAAPSHPEPPKPPARSVPKGRTRVEPPRSRSRATGCES) is disordered. The segment covering 157-166 (HPEPPKPPAR) has biased composition (pro residues). The chain crosses the membrane as a helical span at residues 240 to 260 (IGLWSVLCFASTFATVSTFLI). Residues 261–271 (DMERFKYPERP) are Cytoplasmic-facing. A helical transmembrane segment spans residues 272–292 (IIFLSACYLLVSTGYLIRLIA). Over 293 to 320 (GHEKVACSRGELDLEHIIHYETTGPALC) the chain is Extracellular. A helical membrane pass occupies residues 321-341 (TLVFLLIYFFGMASSIWWVIL). Residues 342–377 (SLTWFLAAGMKWGNEAIAGYSQYFHLAAWLVPSIKS) lie on the Cytoplasmic side of the membrane. The helical transmembrane segment at 378–398 (IAVLALSSVDGDPVAGICFVG) threads the bilayer. Topologically, residues 399 to 407 (NQNLDNLRG) are extracellular. Residues 408–428 (FVLAPLVIYLFIGSMFLLAGF) traverse the membrane as a helical segment. At 429–454 (VSLFRIRSVIKQGGTKTDKLEKLMIR) the chain is on the cytoplasmic side. A helical transmembrane segment spans residues 455–475 (IGIFSVLYTVPATIVVACFFY). Over 476–505 (EQHNRQGWEVAHNCNSCQPEMAQPHRPDYA) the chain is Extracellular. Residues 506-526 (VFMLKYFMCLVVGITSGVWIW) traverse the membrane as a helical segment. Over 527 to 581 (SGKTLESWRAFCTRCCWGSKATGGSMYSDVSTGLTWRSGTGSSVSCPKQMPLSQV) the chain is Cytoplasmic. Residues 529 to 534 (KTLESW) carry the Lys-Thr-X-X-X-Trp motif, mediates interaction with the PDZ domain of Dvl family members motif. Positions 579 to 581 (SQV) match the PDZ-binding motif.

The protein belongs to the G-protein coupled receptor Fz/Smo family. Interacts with lypd6 and the interaction is strongly enhanced by wnt3a.

The protein resides in the membrane. Its subcellular location is the cell membrane. Its function is as follows. Receptor for Wnt proteins. Most of frizzled receptors are coupled to the beta-catenin canonical signaling pathway, which leads to the activation of disheveled proteins, inhibition of GSK-3 kinase, nuclear accumulation of beta-catenin and activation of Wnt target genes. A second signaling pathway involving PKC and calcium fluxes has been seen for some family members, but it is not yet clear if it represents a distinct pathway or if it can be integrated in the canonical pathway, as PKC seems to be required for Wnt-mediated inactivation of GSK-3 kinase. Both pathways seem to involve interactions with G-proteins. May be involved in transduction and intercellular transmission of polarity information during tissue morphogenesis and/or in differentiated tissues. Activation by Wnt8, Wnt5A or Wnt3A induces expression of beta-catenin target genes. Displays an axis-inducing activity. In Xenopus laevis (African clawed frog), this protein is Frizzled-8 (fzd8).